The primary structure comprises 322 residues: Acetyl-coenzyme A carboxylase carboxyl transferase subunit alpha (322 aa).

Positions Asp-39 to Tyr-296 constitute a CoA carboxyltransferase C-terminal domain.

It belongs to the AccA family. Acetyl-CoA carboxylase is a heterohexamer composed of biotin carboxyl carrier protein (accB), biotin carboxylase (accC) and two subunits each of ACCase subunit alpha (accA) and ACCase subunit beta (accD).

The protein resides in the plastid. It localises to the chloroplast. It catalyses the reaction N(6)-carboxybiotinyl-L-lysyl-[protein] + acetyl-CoA = N(6)-biotinyl-L-lysyl-[protein] + malonyl-CoA. The protein operates within lipid metabolism; malonyl-CoA biosynthesis; malonyl-CoA from acetyl-CoA: step 1/1. Its function is as follows. Component of the acetyl coenzyme A carboxylase (ACC) complex. First, biotin carboxylase catalyzes the carboxylation of biotin on its carrier protein (BCCP) and then the CO(2) group is transferred by the carboxyltransferase to acetyl-CoA to form malonyl-CoA. The polypeptide is Acetyl-coenzyme A carboxylase carboxyl transferase subunit alpha (Antithamnion sp. (Red alga)).